The primary structure comprises 76 residues: Small ribosomal subunit protein bS18 (76 aa).

The protein belongs to the bacterial ribosomal protein bS18 family. As to quaternary structure, part of the 30S ribosomal subunit. Forms a tight heterodimer with protein bS6.

Binds as a heterodimer with protein bS6 to the central domain of the 16S rRNA, where it helps stabilize the platform of the 30S subunit. The chain is Small ribosomal subunit protein bS18 from Stutzerimonas stutzeri (strain A1501) (Pseudomonas stutzeri).